The primary structure comprises 538 residues: Bifunctional purine biosynthesis protein PurH (538 aa).

Residues 8–158 form the MGS-like domain; the sequence is IPAPDLVPVR…KNHAYVAIVT (151 aa).

The protein belongs to the PurH family.

It carries out the reaction (6R)-10-formyltetrahydrofolate + 5-amino-1-(5-phospho-beta-D-ribosyl)imidazole-4-carboxamide = 5-formamido-1-(5-phospho-D-ribosyl)imidazole-4-carboxamide + (6S)-5,6,7,8-tetrahydrofolate. The catalysed reaction is IMP + H2O = 5-formamido-1-(5-phospho-D-ribosyl)imidazole-4-carboxamide. It functions in the pathway purine metabolism; IMP biosynthesis via de novo pathway; 5-formamido-1-(5-phospho-D-ribosyl)imidazole-4-carboxamide from 5-amino-1-(5-phospho-D-ribosyl)imidazole-4-carboxamide (10-formyl THF route): step 1/1. Its pathway is purine metabolism; IMP biosynthesis via de novo pathway; IMP from 5-formamido-1-(5-phospho-D-ribosyl)imidazole-4-carboxamide: step 1/1. The polypeptide is Bifunctional purine biosynthesis protein PurH (Mesorhizobium japonicum (strain LMG 29417 / CECT 9101 / MAFF 303099) (Mesorhizobium loti (strain MAFF 303099))).